The following is a 1364-amino-acid chain: Serine protease SepA autotransporter (1364 aa).

Positions 1–56 (MNKIYYLKYCHITKSLIAVSELARRVTCKSHRRLSRRVILTSVAALSLSSAWPALS) are cleaved as a signal peptide. A Peptidase S6 domain is found at 57–307 (ATVSAEIPYQ…VVTTQDFLGQ (251 aa)). Residues H134, D162, and S267 each act as charge relay system in the active site. The Autotransporter domain maps to 1098–1364 (DTQGDAGVWA…AINANFRYVF (267 aa)).

Cleaved to release the mature protein from the outer membrane. Cleavage is performed by an unknown protease.

Its subcellular location is the periplasm. The protein localises to the secreted. The protein resides in the cell surface. It localises to the cell outer membrane. With respect to regulation, inhibited by the serine protease inhibitor PMSF, but not by benzamidine, alpha 1-antitrypsin, alpha 1-antichymotrypsin. Not inhibited by metalloprotease inhibitors such as EDTA and orthophenanthroline. In terms of biological role, major protein secreted in laboratory media showing proteolytic activity. May be involved in invasion and destruction of host intestinal epithelium. This is Serine protease SepA autotransporter (sepA) from Shigella flexneri.